The following is a 68-amino-acid chain: Metallothionein-3 (68 aa).

Met-1 carries the post-translational modification N-acetylmethionine. The segment at 1–30 (MDPETCPCPTGGSCTCSDPCKCEGCTCASS) is beta. A divalent metal cation contacts are provided by Cys-6, Cys-8, Cys-14, Cys-16, Cys-20, Cys-22, Cys-25, and Cys-27. The tract at residues 31–68 (KKSCCSCCPAECEKCAKDCVCKGGEGAEAEEKKCSCCQ) is alpha. Ser-33 is subject to Phosphoserine. A divalent metal cation-binding residues include Cys-34, Cys-35, Cys-37, Cys-38, Cys-42, Cys-45, Cys-49, Cys-51, Cys-64, Cys-66, and Cys-67.

The protein belongs to the metallothionein superfamily. Type 1 family.

In terms of biological role, binds heavy metals. Contains five zinc and one copper atoms per polypeptide chain and only a negligible amount of cadmium. The polypeptide is Metallothionein-3 (MT3) (Bos mutus grunniens (Wild yak)).